We begin with the raw amino-acid sequence, 305 residues long: Dermonecrotic toxin LiSicTox-betaID1 (305 aa).

Residues 1–18 (MQLFIILCLAGSAVQLEG) form the signal peptide. Positions 19–26 (TELDGVER) are excised as a propeptide. Residue H38 is part of the active site. Mg(2+)-binding residues include E58 and D60. H74 acts as the Nucleophile in catalysis. 2 disulfides stabilise this stretch: C78-C84 and C80-C223. D118 lines the Mg(2+) pocket.

The protein belongs to the arthropod phospholipase D family. Class II subfamily. Class IIb sub-subfamily. The cofactor is Mg(2+). As to expression, expressed by the venom gland.

It localises to the secreted. It carries out the reaction an N-(acyl)-sphingosylphosphocholine = an N-(acyl)-sphingosyl-1,3-cyclic phosphate + choline. The enzyme catalyses an N-(acyl)-sphingosylphosphoethanolamine = an N-(acyl)-sphingosyl-1,3-cyclic phosphate + ethanolamine. The catalysed reaction is a 1-acyl-sn-glycero-3-phosphocholine = a 1-acyl-sn-glycero-2,3-cyclic phosphate + choline. It catalyses the reaction a 1-acyl-sn-glycero-3-phosphoethanolamine = a 1-acyl-sn-glycero-2,3-cyclic phosphate + ethanolamine. Functionally, dermonecrotic toxins cleave the phosphodiester linkage between the phosphate and headgroup of certain phospholipids (sphingolipid and lysolipid substrates), forming an alcohol (often choline) and a cyclic phosphate. This toxin acts on sphingomyelin (SM) with low activity. It may also act on ceramide phosphoethanolamine (CPE), lysophosphatidylcholine (LPC) and lysophosphatidylethanolamine (LPE), but not on lysophosphatidylserine (LPS), and lysophosphatidylglycerol (LPG). It acts by transphosphatidylation, releasing exclusively cyclic phosphate products as second products. Has no or weak activities in inducing dermonecrosis, hemolysis, inflammatory response, platelet aggregation and increase in vessel permeability. In vivo, shows no lethality when injected at higher dose into mice. The chain is Dermonecrotic toxin LiSicTox-betaID1 from Loxosceles intermedia (Brown spider).